Consider the following 120-residue polypeptide: Alpha-amylase inhibitor Haim-2 (120 aa).

The N-terminal stretch at 1–32 is a signal peptide; the sequence is MKRYVCSTFVACVMVLCVIPASGAAAHEAVAE. Intrachain disulfides connect C43/C59 and C77/C104.

Functionally, inhibits mammalian alpha-amylases specifically but has no action on plant and microbial alpha-amylases. The polypeptide is Alpha-amylase inhibitor Haim-2 (Streptomyces griseosporeus).